Reading from the N-terminus, the 66-residue chain is UPF0337 protein bsl1473 (66 aa).

This sequence belongs to the UPF0337 (CsbD) family.

This is UPF0337 protein bsl1473 from Bradyrhizobium diazoefficiens (strain JCM 10833 / BCRC 13528 / IAM 13628 / NBRC 14792 / USDA 110).